The following is a 247-amino-acid chain: DNA polymerase sliding clamp (247 aa).

The protein belongs to the PCNA family. Homotrimer. The subunits circularize to form a toroid; DNA passes through its center. Replication factor C (RFC) is required to load the toroid on the DNA.

Sliding clamp subunit that acts as a moving platform for DNA processing. Responsible for tethering the catalytic subunit of DNA polymerase and other proteins to DNA during high-speed replication. The polypeptide is DNA polymerase sliding clamp (Thermofilum pendens (strain DSM 2475 / Hrk 5)).